The chain runs to 360 residues: Phospho-N-acetylmuramoyl-pentapeptide-transferase (360 aa).

The next 10 helical transmembrane spans lie at 18–38 (VFSY…FISL), 73–93 (TMGG…WADL), 94–114 (SNIY…VGFV), 134–154 (YFWQ…IAQG), 168–188 (LLPQ…VGTS), 199–219 (GLAI…AYVT), 239–259 (LVIV…FNTY), 263–283 (VFMG…IAIL), 288–308 (LVLF…ILQV), and 338–358 (VIVR…ATLK).

Belongs to the glycosyltransferase 4 family. MraY subfamily. Requires Mg(2+) as cofactor.

The protein resides in the cell inner membrane. It catalyses the reaction UDP-N-acetyl-alpha-D-muramoyl-L-alanyl-gamma-D-glutamyl-meso-2,6-diaminopimeloyl-D-alanyl-D-alanine + di-trans,octa-cis-undecaprenyl phosphate = di-trans,octa-cis-undecaprenyl diphospho-N-acetyl-alpha-D-muramoyl-L-alanyl-D-glutamyl-meso-2,6-diaminopimeloyl-D-alanyl-D-alanine + UMP. It participates in cell wall biogenesis; peptidoglycan biosynthesis. Catalyzes the initial step of the lipid cycle reactions in the biosynthesis of the cell wall peptidoglycan: transfers peptidoglycan precursor phospho-MurNAc-pentapeptide from UDP-MurNAc-pentapeptide onto the lipid carrier undecaprenyl phosphate, yielding undecaprenyl-pyrophosphoryl-MurNAc-pentapeptide, known as lipid I. The polypeptide is Phospho-N-acetylmuramoyl-pentapeptide-transferase (Colwellia psychrerythraea (strain 34H / ATCC BAA-681) (Vibrio psychroerythus)).